The following is an 82-amino-acid chain: MCLRSHFKVAFTQRKVELSKELRRSRSSRNGGLPLQEQPMGQKWGWHRGEPGHPRMEELNEWPQNGDHWSRKWPPPCAFTPG.

Residues 22–82 (LRRSRSSRNG…WPPPCAFTPG (61 aa)) form a disordered region. Residues 47–58 (HRGEPGHPRMEE) show a composition bias toward basic and acidic residues. Residues 73-82 (WPPPCAFTPG) show a composition bias toward pro residues.

This is an uncharacterized protein from Homo sapiens (Human).